The following is a 190-amino-acid chain: dTTP/UTP pyrophosphatase (190 aa).

D70 (proton acceptor) is an active-site residue.

It belongs to the Maf family. YhdE subfamily. Requires a divalent metal cation as cofactor.

It localises to the cytoplasm. The catalysed reaction is dTTP + H2O = dTMP + diphosphate + H(+). It carries out the reaction UTP + H2O = UMP + diphosphate + H(+). Its function is as follows. Nucleoside triphosphate pyrophosphatase that hydrolyzes dTTP and UTP. May have a dual role in cell division arrest and in preventing the incorporation of modified nucleotides into cellular nucleic acids. In Paramagnetospirillum magneticum (strain ATCC 700264 / AMB-1) (Magnetospirillum magneticum), this protein is dTTP/UTP pyrophosphatase.